We begin with the raw amino-acid sequence, 141 residues long: Hemoglobin subunit alpha-1/2 (141 aa).

A Globin domain is found at 1–141; that stretch reads VLSPADKTNV…VSTVLTSKYR (141 aa). S3 carries the post-translational modification Phosphoserine. An N6-succinyllysine modification is found at K7. T8 is modified (phosphothreonine). K11 is subject to N6-succinyllysine. At K16 the chain carries N6-acetyllysine; alternate. K16 is subject to N6-succinyllysine; alternate. Y24 bears the Phosphotyrosine mark. S35 carries the post-translational modification Phosphoserine. N6-succinyllysine is present on K40. S49 bears the Phosphoserine mark. Residue H58 participates in O2 binding. Residue H87 coordinates heme b. Position 102 is a phosphoserine (S102). T108 is modified (phosphothreonine). Phosphoserine occurs at positions 124 and 131. Phosphothreonine occurs at positions 134 and 137. At S138 the chain carries Phosphoserine.

The protein belongs to the globin family. Heterotetramer of two alpha chains and two beta chains. As to expression, red blood cells.

Functionally, involved in oxygen transport from the lung to the various peripheral tissues. The chain is Hemoglobin subunit alpha-1/2 from Macaca sinica (Toque macaque).